A 459-amino-acid polypeptide reads, in one-letter code: MDREDLWHSALGAVWDPTCWLKGQQERYLGQVTVAQKEIYNEKSVCGGNTTENSSTEGSMLNTPQSIPVTPCNWNSYRKDSKQNSELMKTSRMFVQKKVYGCDECGKTFRQSSSLLKHQRIHTGEKPYTCNVCDKHFIERSSLTVHQRTHTGEKPYKCHECGKAFSQSMNLTVHQRTHTGEKPYQCKECGKAFRKNSSLIQHERIHTGEKPYKCHDCGKAFTQSMNLTVHQRTHTGEKPYECNQCGKAFSQSMHLIVHQRSHTGEKPYECSECGKAFSKSSTLTLHQRNHTGEKPYKCNKCGKSFSQSTYLIEHQRLHSGVKPFECNQCGKAFSKNSSLTQHRRIHTGEKPYECMICGKHFTGRSSLTVHQVIHTGEKPYECTECGKAFSQSAYLIEHQRIHTGEKPYECDQCGKAFIKNSSLIVHQRIHTGEKPYQCNECGKSFSRSTNLTRHQRTHT.

C2H2-type zinc fingers lie at residues 100–122, 128–150, 156–178, 184–206, 212–234, 240–262, 268–290, 296–318, 324–346, 352–374, 380–402, 408–430, and 436–458; these read YGCDECGKTFRQSSSLLKHQRIH, YTCNVCDKHFIERSSLTVHQRTH, YKCHECGKAFSQSMNLTVHQRTH, YQCKECGKAFRKNSSLIQHERIH, YKCHDCGKAFTQSMNLTVHQRTH, YECNQCGKAFSQSMHLIVHQRSH, YECSECGKAFSKSSTLTLHQRNH, YKCNKCGKSFSQSTYLIEHQRLH, FECNQCGKAFSKNSSLTQHRRIH, YECMICGKHFTGRSSLTVHQVIH, YECTECGKAFSQSAYLIEHQRIH, YECDQCGKAFIKNSSLIVHQRIH, and YQCNECGKSFSRSTNLTRHQRTH.

This sequence belongs to the krueppel C2H2-type zinc-finger protein family.

The protein resides in the nucleus. Functionally, probable transcription factor involved in neuronal differentiation and/or phenotypic maintenance. The chain is Zinc finger protein ZFP2 (Zfp2) from Mus musculus (Mouse).